The sequence spans 1726 residues: MSDFIESEAEESEEEFEEKDLKPKKTQRFMEEDEEEEEENTEDQDEHGNLRGLIDDDDVEEEEEEERGEPPAGEDSDSGEEVRHRRRKRSFDDYLDDDDLDLIEENLGVKVKRRKKKYSRVKTMDDEGDDDDEKDLIADEIFTGDGDGEGEVEDGEAVDTLHPRDDEEEEDDEESDIDDFIVDDDGQPITKKKGKKFSGYTDAALQEAQEIFGGDFDFAEFDTEAYDHAEEEEEDQDDESWDRPKKQTKRRVSRRSIFEIYEPSELESSHMTDQDNEIRSTDMPERFQLRAIPVKPAEDDELEEEAEWIYRNAFSTPTISMQESTDYLDRGTTTNFSRKGPSTIAKIKEALNFMRNQHFEVPFIAFYRKEYVEPELNINDLWKVWQWDEKWTQLKTRKQNLTRLFQRMQSYQFEQISADPDKPLADSTRPLDTADMERLKDVQSIDELGDVYNHFLLYYGRDIPKMQNAAKGGKKKLKKIKEVSEEDGEEAEVEEEEEEEEQKGPDLKQASRRDMYSICQSAGLDGLAKKFGLTPEQFGENLRDSYQRHETEQFPAEPLELAKDYVCSQFNTPEAVLEGARYMVAMQIAREPLVRHVLRQTFQERAKINIKPTKKGKKDVDEAHFAYSFKYLKNKPVKELSGDQFLKMCLAEEEGLLAIDICIDLVGVKGYGDQTYFDEIKQFYYRDEFSHQVQEWNKQRTLAIERSLQQFLYPQMAKELKNKLIAEAKDNIVKSCCKKLYNWLKVAPYRPDQQVEEDDDLMDESQGKGIRVLGVAFASGRDTPVFCSLINGEGEVVDFLRLPYFLKRRNAWREDEREKKQQDVENLKKFLLSKKPHVVAVSGENRDAHMVMEDIKRTISELEQNSSLPVVGVELVDNELAVLYMNSKKSEADFRDYPPLLRQAVSVARKIQDPLVEFAQVCSTDDDILCLKLHPLQEHVVKEELLSALYCEFINRVNEVGVDVNRAIAHPYTQSLVQYICGLGPRKGSHLLKILKQNNTRLENRTQLVTMCHMGPKVFINCAGFIKIDTASLGDSTDSYIEVLDGSRVHPETYEWARKMAVDALEYDESAEDANPAGALEEILENPERLKDLDLDAFAEELERQGYGNKGITLYDIRAELSCRYKDLRAPYRPPNTEEVFNMLTKETPETFYIGKLITCVVTNIAHRRPQGESYDQAIRNDETGLWQCPFCQQDNFPELSEVWNHFDSGSCPGQAIGVRTRLDNAVMGFIPTKFLSDKVVKHPEERVKPGMTVHCRIMKIDIEKFNVDLTCRTSDLSDKNNEWKLPKDTYYDFDAETDDVKQEEEQKKKQQRTTYIKRVIAHPSFHNINFKQAEKMMESMDQGDVVIRPSSKGENHLTVTWKVADGIYQHVDVREEGKENAFSLGHTLWINTEEFEDLDEITARYVQPMAAFARDLLGHKYFHECNGGDRKKMEELLVRTKKEKPTFIPYYISACRDLPGKFLLGYQPRGKPRIEYVTITPDGFRYRSQIFPTVNGLFRWFKDHYQDPVPGVTPASSRTRTPASVNATPANINIADLTRAVNSLPRNMTSQMFNAIAAVTGQGQNPNTTPAQWASSQYGYSGGSSAGGGGGSSSAYHVFATPQQPMATPLMTPSYSYTTPGQQQAMTTPQYPSSTPQSSHGHHQHSSSTPSSSSSRVRTPQPKASSHTAVDWGKMAEQWLQEKEAERRKQKTPRMTPRPSPSPMIESTPMSIAGDATPLLDEMDR.

3 stretches are compositionally biased toward acidic residues: residues Met-1–Glu-18, Glu-31–Asp-45, and Asp-55–Gly-79. 3 disordered regions span residues Met-1–Lys-196, Ala-219–Thr-248, and Glu-482–Arg-512. The residue at position 90 (Ser-90) is a Phosphoserine. Acidic residues predominate over residues Asp-93–Glu-104. Positions Lys-110–Arg-120 are enriched in basic residues. Acidic residues-rich tracts occupy residues Gly-146–Ala-157, Asp-166–Gly-186, Ala-219–Ser-240, and Ser-484–Glu-501. Basic and acidic residues predominate over residues Gln-502–Arg-512. The stretch at Leu-806–Asn-865 forms a coiled coil. One can recognise an S1 motif domain in the interval Trp-1204–Arg-1273. Positions Tyr-1316 to Cys-1426 constitute an SH2 domain. Thr-1522 bears the Phosphothreonine mark. Residue Ser-1525 is modified to Phosphoserine. Polar residues predominate over residues Leu-1611 to Met-1627. A disordered region spans residues Leu-1611–Arg-1726. 2 stretches are compositionally biased toward low complexity: residues Thr-1628–Ser-1640 and Ser-1647–Ser-1656. The span at Arg-1657–Thr-1669 shows a compositional bias: polar residues.

Belongs to the SPT6 family.

Its subcellular location is the nucleus. Functionally, histone H3-H4 chaperone that plays a role in maintenance of chromatin structure during RNA polymerase II transcription elongation. Promotes the activation of the myogenic gene program by entailing erasure of the repressive H3K27me3 epigenetic mark through stabilization of the chromatin interaction of the H3K27 demethylase KDM6A. Plays an important role during early patterning and somitogenesis of the embryo. The protein is Transcription elongation factor SPT6 (supt6h) of Danio rerio (Zebrafish).